The sequence spans 645 residues: 1-deoxy-D-xylulose-5-phosphate synthase 1 (645 aa).

Thiamine diphosphate contacts are provided by residues His-79 and 120-122; that span reads GHS. Asp-151 is a binding site for Mg(2+). Residues 152-153, Asn-180, Tyr-291, and Glu-373 each bind thiamine diphosphate; that span reads GS. Asn-180 is a Mg(2+) binding site.

It belongs to the transketolase family. DXPS subfamily. In terms of assembly, homodimer. Mg(2+) is required as a cofactor. It depends on thiamine diphosphate as a cofactor.

The enzyme catalyses D-glyceraldehyde 3-phosphate + pyruvate + H(+) = 1-deoxy-D-xylulose 5-phosphate + CO2. It functions in the pathway metabolic intermediate biosynthesis; 1-deoxy-D-xylulose 5-phosphate biosynthesis; 1-deoxy-D-xylulose 5-phosphate from D-glyceraldehyde 3-phosphate and pyruvate: step 1/1. Functionally, catalyzes the acyloin condensation reaction between C atoms 2 and 3 of pyruvate and glyceraldehyde 3-phosphate to yield 1-deoxy-D-xylulose-5-phosphate (DXP). The protein is 1-deoxy-D-xylulose-5-phosphate synthase 1 of Rhodospirillum rubrum (strain ATCC 11170 / ATH 1.1.1 / DSM 467 / LMG 4362 / NCIMB 8255 / S1).